The sequence spans 525 residues: Signal recognition particle protein (525 aa).

GTP contacts are provided by residues Gly107–Thr114, Asp196–Arg200, and Thr254–Asp257. Residues Gly437 to Lys525 form a disordered region. A compositionally biased stretch (basic residues) spans Ser447 to Thr467. Residues Gly480 to Leu497 show a composition bias toward low complexity.

The protein belongs to the GTP-binding SRP family. SRP54 subfamily. As to quaternary structure, part of the signal recognition particle protein translocation system, which is composed of SRP and FtsY.

The protein resides in the cytoplasm. The enzyme catalyses GTP + H2O = GDP + phosphate + H(+). In terms of biological role, involved in targeting and insertion of nascent membrane proteins into the cytoplasmic membrane. Binds to the hydrophobic signal sequence of the ribosome-nascent chain (RNC) as it emerges from the ribosomes. The SRP-RNC complex is then targeted to the cytoplasmic membrane where it interacts with the SRP receptor FtsY. The polypeptide is Signal recognition particle protein (Mycobacterium bovis (strain ATCC BAA-935 / AF2122/97)).